Consider the following 246-residue polypeptide: Protein 3F (246 aa).

Positions methionine 1–alanine 19 are cleaved as a signal peptide. A glycan (N-linked (GlcNAc...) asparagine) is linked at asparagine 52. The segment covering glutamate 113–alanine 124 has biased composition (basic and acidic residues). The segment at glutamate 113–alanine 223 is disordered. Residues alanine 126–serine 145 show a composition bias toward polar residues. Tandem repeats lie at residues serine 145–alanine 153, serine 154–alanine 162, and serine 163–alanine 171. A 3.5 X 9 AA tandem repeats of S-P-K-[ST]-D-A-K-E-A region spans residues serine 145–aspartate 176. The span at proline 146 to threonine 177 shows a compositional bias: basic and acidic residues. A 4; truncated repeat occupies serine 172 to aspartate 176. Residues serine 181 to asparagine 213 are compositionally biased toward low complexity.

This is Protein 3F (pspG) from Dictyostelium discoideum (Social amoeba).